The following is a 481-amino-acid chain: MSNLLALVVGFVIVIGHLGILVNGLGVNWGTMATHKLPPKTVVQMLKDNNINKVKLFDADETTMGALAGSGLEVMVAIPNDQLKVMTSYDRAKDWVRKNVTRYNFDGGVNITFVAVGNEPFLKSYNGSFINLTFPALANIQNALNEAGLGNSVKATVPLNADVYDSPASNPVPSAGRFRPDIIGQMTQIVDFLGKNNAPITINIYPFLSLYGNDDFPLNYAFFDGAEPINDNGIDYTNVFDANFDTLVSSLKAVGHGDMPIIVGEVGWPTEGDKHANAGSAYRFYNGLLPRLGTNKGTPLRPTYIEVYLFGLLDEDAKSIAPGPFERHWGIFKFDGQPKFPIDLSGQGQSKFLIGAQNVPYLPNKWCTFNPEAKDLTKLAANIDYACTFSDCTALGYGSSCNTLDANGNASYAFNMFFQVKNQDESACYFQGLATITTQNISQGQCNFPIQIVASSASSFSCSSYSLVVLIVWFLLSGMMF.

The signal sequence occupies residues 1 to 33 (MSNLLALVVGFVIVIGHLGILVNGLGVNWGTMA). N-linked (GlcNAc...) asparagine glycosylation is found at Asn-99 and Asn-110. Residue Glu-119 is the Proton donor of the active site. 2 N-linked (GlcNAc...) asparagine glycosylation sites follow: Asn-126 and Asn-131. Catalysis depends on Glu-265, which acts as the Nucleophile. A disulfide bridge connects residues Cys-367 and Cys-428. N-linked (GlcNAc...) asparagine glycans are attached at residues Asn-409 and Asn-440. Residue Ser-455 is the site of GPI-anchor amidated serine attachment. Positions 456–481 (SASSFSCSSYSLVVLIVWFLLSGMMF) are cleaved as a propeptide — removed in mature form.

It belongs to the glycosyl hydrolase 17 family. Post-translationally, contains two additional disulfide bonds.

The protein resides in the secreted. It localises to the cell wall. The protein localises to the cell membrane. The catalysed reaction is Hydrolysis of (1-&gt;3)-beta-D-glucosidic linkages in (1-&gt;3)-beta-D-glucans.. In Arabidopsis thaliana (Mouse-ear cress), this protein is Glucan endo-1,3-beta-glucosidase 8.